The following is a 175-amino-acid chain: NADH-ubiquinone oxidoreductase chain 6 (175 aa).

Helical transmembrane passes span 1 to 21 (MMTY…VGFS), 25 to 45 (SPIY…GIIM), 47 to 67 (FGGS…MLVV), 88 to 108 (TVMG…LYVL), and 149 to 169 (YGAW…LVIL).

This sequence belongs to the complex I subunit 6 family. As to quaternary structure, core subunit of respiratory chain NADH dehydrogenase (Complex I) which is composed of 45 different subunits.

The protein localises to the mitochondrion inner membrane. It carries out the reaction a ubiquinone + NADH + 5 H(+)(in) = a ubiquinol + NAD(+) + 4 H(+)(out). Core subunit of the mitochondrial membrane respiratory chain NADH dehydrogenase (Complex I) which catalyzes electron transfer from NADH through the respiratory chain, using ubiquinone as an electron acceptor. Essential for the catalytic activity and assembly of complex I. The protein is NADH-ubiquinone oxidoreductase chain 6 (MT-ND6) of Equus caballus (Horse).